Consider the following 455-residue polypeptide: Trigger factor (455 aa).

The PPIase FKBP-type domain maps to 169–262; sequence GDVAIVDYEG…VKELKAKELP (94 aa).

Belongs to the FKBP-type PPIase family. Tig subfamily.

The protein localises to the cytoplasm. The catalysed reaction is [protein]-peptidylproline (omega=180) = [protein]-peptidylproline (omega=0). Involved in protein export. Acts as a chaperone by maintaining the newly synthesized protein in an open conformation. Functions as a peptidyl-prolyl cis-trans isomerase. The protein is Trigger factor of Rippkaea orientalis (strain PCC 8801 / RF-1) (Cyanothece sp. (strain PCC 8801)).